We begin with the raw amino-acid sequence, 165 residues long: ATP synthase subunit b (165 aa).

Residues 7-27 (STTIGDIIIVSGSVLLLFILI) form a helical membrane-spanning segment.

This sequence belongs to the ATPase B chain family. As to quaternary structure, F-type ATPases have 2 components, F(1) - the catalytic core - and F(0) - the membrane proton channel. F(1) has five subunits: alpha(3), beta(3), gamma(1), delta(1), epsilon(1). F(0) has three main subunits: a(1), b(2) and c(10-14). The alpha and beta chains form an alternating ring which encloses part of the gamma chain. F(1) is attached to F(0) by a central stalk formed by the gamma and epsilon chains, while a peripheral stalk is formed by the delta and b chains.

The protein resides in the cell membrane. In terms of biological role, f(1)F(0) ATP synthase produces ATP from ADP in the presence of a proton or sodium gradient. F-type ATPases consist of two structural domains, F(1) containing the extramembraneous catalytic core and F(0) containing the membrane proton channel, linked together by a central stalk and a peripheral stalk. During catalysis, ATP synthesis in the catalytic domain of F(1) is coupled via a rotary mechanism of the central stalk subunits to proton translocation. Component of the F(0) channel, it forms part of the peripheral stalk, linking F(1) to F(0). The sequence is that of ATP synthase subunit b from Streptococcus agalactiae serotype Ia (strain ATCC 27591 / A909 / CDC SS700).